We begin with the raw amino-acid sequence, 195 residues long: Glucagon family neuropeptides (195 aa).

Residues Met-1–Tyr-20 form the signal peptide. A propeptide spanning residues Ser-21–Thr-82 is cleaved from the precursor. A disordered region spans residues Val-113 to Asp-132. The segment covering Glu-115–Glu-124 has biased composition (acidic residues). Lys-167 is subject to Lysine amide. A propeptide spanning residues Leu-171 to Tyr-195 is cleaved from the precursor.

The protein belongs to the glucagon family. Brain, testis, ovary and stomach. Not pancreas, pituitary, muscle and liver.

It is found in the secreted. Functionally, primary role of GHRH is to release GH from the pituitary. PACAP plays pivotal roles as a neurotransmitter and/or a neuromodulator. The sequence is that of Glucagon family neuropeptides from Clarias macrocephalus (Bighead catfish).